Consider the following 59-residue polypeptide: UPF0391 membrane protein lpp2589 (59 aa).

A run of 2 helical transmembrane segments spans residues 5–25 and 30–50; these read ALIF…GIAV and IAKI…IMGL.

This sequence belongs to the UPF0391 family.

The protein localises to the cell membrane. The sequence is that of UPF0391 membrane protein lpp2589 from Legionella pneumophila (strain Paris).